The primary structure comprises 461 residues: Adenosylmethionine-8-amino-7-oxononanoate aminotransferase (461 aa).

Position 117-118 (117-118 (GA)) interacts with pyridoxal 5'-phosphate. Tyr150 is a substrate binding site. Asp263 is a pyridoxal 5'-phosphate binding site. The substrate site is built by Lys296, Gly331, and Arg426. N6-(pyridoxal phosphate)lysine is present on Lys296.

Belongs to the class-III pyridoxal-phosphate-dependent aminotransferase family. BioA subfamily. In terms of assembly, homodimer. Requires pyridoxal 5'-phosphate as cofactor.

The protein resides in the cytoplasm. The catalysed reaction is (8S)-8-amino-7-oxononanoate + S-adenosyl-L-methionine = S-adenosyl-4-methylsulfanyl-2-oxobutanoate + (7R,8S)-7,8-diammoniononanoate. Its pathway is cofactor biosynthesis; biotin biosynthesis; 7,8-diaminononanoate from 8-amino-7-oxononanoate (SAM route): step 1/1. Functionally, catalyzes the transfer of the alpha-amino group from S-adenosyl-L-methionine (SAM) to 7-keto-8-aminopelargonic acid (KAPA) to form 7,8-diaminopelargonic acid (DAPA). It is the only aminotransferase known to utilize SAM as an amino donor. The chain is Adenosylmethionine-8-amino-7-oxononanoate aminotransferase from Methanocaldococcus jannaschii (strain ATCC 43067 / DSM 2661 / JAL-1 / JCM 10045 / NBRC 100440) (Methanococcus jannaschii).